The following is a 482-amino-acid chain: Bifunctional protein GlmU (482 aa).

The pyrophosphorylase stretch occupies residues 1–238; sequence MSAIRPAAVV…HREIAGINNR (238 aa). UDP-N-acetyl-alpha-D-glucosamine contacts are provided by residues 12 to 15, lysine 26, glutamine 79, and 84 to 85; these read LAAG and GT. Aspartate 110 provides a ligand contact to Mg(2+). Positions 147, 163, 178, and 236 each coordinate UDP-N-acetyl-alpha-D-glucosamine. Asparagine 236 is a Mg(2+) binding site. The linker stretch occupies residues 239-259; it reads VQLAEARRILNDRLLTRAMLA. The segment at 260–482 is N-acetyltransferase; the sequence is GVTVVDPATT…VASRKPEGED (223 aa). Arginine 341 and lysine 359 together coordinate UDP-N-acetyl-alpha-D-glucosamine. Residue histidine 371 is the Proton acceptor of the active site. 2 residues coordinate UDP-N-acetyl-alpha-D-glucosamine: tyrosine 374 and asparagine 385. Acetyl-CoA-binding positions include alanine 388, 394–395, serine 413, alanine 431, and arginine 448; that span reads NY.

It in the N-terminal section; belongs to the N-acetylglucosamine-1-phosphate uridyltransferase family. In the C-terminal section; belongs to the transferase hexapeptide repeat family. Homotrimer. Mg(2+) is required as a cofactor.

The protein localises to the cytoplasm. It carries out the reaction alpha-D-glucosamine 1-phosphate + acetyl-CoA = N-acetyl-alpha-D-glucosamine 1-phosphate + CoA + H(+). The catalysed reaction is N-acetyl-alpha-D-glucosamine 1-phosphate + UTP + H(+) = UDP-N-acetyl-alpha-D-glucosamine + diphosphate. It functions in the pathway nucleotide-sugar biosynthesis; UDP-N-acetyl-alpha-D-glucosamine biosynthesis; N-acetyl-alpha-D-glucosamine 1-phosphate from alpha-D-glucosamine 6-phosphate (route II): step 2/2. Its pathway is nucleotide-sugar biosynthesis; UDP-N-acetyl-alpha-D-glucosamine biosynthesis; UDP-N-acetyl-alpha-D-glucosamine from N-acetyl-alpha-D-glucosamine 1-phosphate: step 1/1. The protein operates within bacterial outer membrane biogenesis; LPS lipid A biosynthesis. Its function is as follows. Catalyzes the last two sequential reactions in the de novo biosynthetic pathway for UDP-N-acetylglucosamine (UDP-GlcNAc). The C-terminal domain catalyzes the transfer of acetyl group from acetyl coenzyme A to glucosamine-1-phosphate (GlcN-1-P) to produce N-acetylglucosamine-1-phosphate (GlcNAc-1-P), which is converted into UDP-GlcNAc by the transfer of uridine 5-monophosphate (from uridine 5-triphosphate), a reaction catalyzed by the N-terminal domain. This Streptomyces avermitilis (strain ATCC 31267 / DSM 46492 / JCM 5070 / NBRC 14893 / NCIMB 12804 / NRRL 8165 / MA-4680) protein is Bifunctional protein GlmU.